Reading from the N-terminus, the 109-residue chain is UPF0060 membrane protein PCC8801_1733 (109 aa).

A run of 4 helical transmembrane segments spans residues 7 to 27, 36 to 56, 58 to 78, and 87 to 107; these read LLYF…VWLW, YALL…LQTA, FGRV…LWGW, and SYDW…MYAP.

Belongs to the UPF0060 family.

The protein localises to the cell inner membrane. The sequence is that of UPF0060 membrane protein PCC8801_1733 from Rippkaea orientalis (strain PCC 8801 / RF-1) (Cyanothece sp. (strain PCC 8801)).